The sequence spans 415 residues: Dynein assembly factor with WD repeat domains 1 (415 aa).

WD repeat units lie at residues 90–129, 132–174, 175–214, 217–256, 259–298, 301–340, 343–384, and 386–415; these read AHIL…ELNT, GHRN…HTFR, GHTA…EVYT, GHSA…KVNI, GHCA…CVAT, GHDD…CIAK, GHEG…QVLE, and HTDE…RIWR.

Belongs to the WD repeat WDR69 family. As to quaternary structure, interacts with IFT46.

The protein resides in the cytoplasm. Its subcellular location is the cytoskeleton. It localises to the flagellum basal body. The protein localises to the flagellum axoneme. In terms of biological role, required for axonemal dynein assembly and ciliary motility in ciliated organs, including Kupffer's vesicle, during embryogenesis. Facilitates the onset of robust cilia motility during development. The protein is Dynein assembly factor with WD repeat domains 1 of Homo sapiens (Human).